The following is a 718-amino-acid chain: Coiled-coil domain-containing protein 157 (718 aa).

A coiled-coil region spans residues 300-603; it reads LRAQLEDAEG…LTKIREVAQQ (304 aa). Residues 469 to 482 are compositionally biased toward basic and acidic residues; the sequence is RGSLDEAEAQRSEL. 2 disordered regions span residues 469–490 and 617–690; these read RGSLDEAEAQRSELEEQLQSLQ and PPYK…TQNP. Over residues 639-659 the composition is skewed to low complexity; it reads TGRRQSPGSRTSSTGRTHPGG.

In Mus musculus (Mouse), this protein is Coiled-coil domain-containing protein 157 (Ccdc157).